The following is a 307-amino-acid chain: Ribonuclease Z (307 aa).

Residues H63, H65, D67, H68, H140, D211, and H269 each coordinate Zn(2+). D67 serves as the catalytic Proton acceptor.

Belongs to the RNase Z family. As to quaternary structure, homodimer. Requires Zn(2+) as cofactor.

It catalyses the reaction Endonucleolytic cleavage of RNA, removing extra 3' nucleotides from tRNA precursor, generating 3' termini of tRNAs. A 3'-hydroxy group is left at the tRNA terminus and a 5'-phosphoryl group is left at the trailer molecule.. Its function is as follows. Zinc phosphodiesterase, which displays some tRNA 3'-processing endonuclease activity. Probably involved in tRNA maturation, by removing a 3'-trailer from precursor tRNA. The polypeptide is Ribonuclease Z (Geobacillus kaustophilus (strain HTA426)).